We begin with the raw amino-acid sequence, 438 residues long: Probable exopolygalacturonase B (438 aa).

Positions methionine 1–glycine 15 are cleaved as a signal peptide. 3 N-linked (GlcNAc...) asparagine glycosylation sites follow: asparagine 118, asparagine 185, and asparagine 225. The stretch at threonine 209–asparagine 248 is one PbH1 1 repeat. Aspartate 255 (proton donor) is an active-site residue. Residues cysteine 257 and cysteine 274 are joined by a disulfide bond. Asparagine 263 and asparagine 275 each carry an N-linked (GlcNAc...) asparagine glycan. Histidine 278 is a catalytic residue. 2 PbH1 repeats span residues isoleucine 295–alanine 316 and isoleucine 327–glutamine 348. N-linked (GlcNAc...) asparagine glycosylation is found at asparagine 302, asparagine 329, asparagine 354, and asparagine 366. Residues cysteine 392 and cysteine 398 are joined by a disulfide bond. The stretch at cysteine 398–cysteine 430 is one PbH1 4 repeat. Asparagine 400 and asparagine 407 each carry an N-linked (GlcNAc...) asparagine glycan.

It belongs to the glycosyl hydrolase 28 family.

It is found in the secreted. It catalyses the reaction [(1-&gt;4)-alpha-D-galacturonosyl](n) + H2O = alpha-D-galacturonate + [(1-&gt;4)-alpha-D-galacturonosyl](n-1). Functionally, specific in hydrolyzing the terminal glycosidic bond of polygalacturonic acid and oligogalacturonates. This chain is Probable exopolygalacturonase B (pgxB), found in Aspergillus niger (strain ATCC MYA-4892 / CBS 513.88 / FGSC A1513).